The following is a 407-amino-acid chain: BRCA1-A complex subunit Abraxas 1 (407 aa).

An MPN domain is found at 7-155 (LGVLSGFVLG…THCLEHALYK (149 aa)). A Phosphoserine modification is found at Ser-48. A coiled-coil region spans residues 209 to 259 (LKEVHKINEMYAAVQEELKSICQKVEQSEREVEKLLMDVNQLKEVRRTQQA). Residues 344–407 (KRKALDTHDQ…DADYPRSPTF (64 aa)) form a disordered region. The span at 347–366 (ALDTHDQGSVKRPRLLETES) shows a compositional bias: basic and acidic residues. Phosphoserine is present on residues Ser-384, Ser-385, Ser-394, and Ser-404. The segment covering 388–399 (IDIEMGSPEDDA) has biased composition (acidic residues). The short motif at 404–407 (SPTF) is the pSXXF motif element.

Belongs to the FAM175 family. Abraxas subfamily. Component of the ARISC complex, at least composed of UIMC1/RAP80, ABRAXAS1, BRCC3/BRCC36, BABAM2 and BABAM1/NBA1. Component of the BRCA1-A complex, at least composed of the BRCA1, BARD1, UIMC1/RAP80, ABRAXAS1, BRCC3/BRCC36, BABAM2 and BABAM1/NBA1. In the complex, interacts directly with UIMC1/RAP80, BRCC3/BRCC36 and BABAM2. Homodimer. Interacts directly (when phosphorylated at Ser-404) with BRCA1. The phosphorylated homodimer can interact directly with two BRCA1 chains, giving rise to a heterotetramer. Binds polyubiquitin. Post-translationally, phosphorylation of Ser-404 of the pSXXF motif by ATM or ATR constitutes a specific recognition motif for the BRCT domain of BRCA1.

The protein resides in the nucleus. Functionally, involved in DNA damage response and double-strand break (DSB) repair. Component of the BRCA1-A complex, acting as a central scaffold protein that assembles the various components of the complex and mediates the recruitment of BRCA1. The BRCA1-A complex specifically recognizes 'Lys-63'-linked ubiquitinated histones H2A and H2AX at DNA lesion sites, leading to target the BRCA1-BARD1 heterodimer to sites of DNA damage at DSBs. This complex also possesses deubiquitinase activity that specifically removes 'Lys-63'-linked ubiquitin on histones H2A and H2AX. The chain is BRCA1-A complex subunit Abraxas 1 from Mus musculus (Mouse).